A 250-amino-acid chain; its full sequence is Heat stress transcription factor C-1b (250 aa).

A coiled-coil region spans residues 129-182; it reads EEGEEVRGTIEAVQRLREEQRGMEEELQAMDQRLRAAESRPGQMMAFLAKLADE. The segment at 144–180 is hydrophobic repeat HR-A/B; the sequence is LREEQRGMEEELQAMDQRLRAAESRPGQMMAFLAKLA. The segment at 199–226 is disordered; it reads AAGNNGSDPCKRRRIGADTGRGGVATGG. The short motif at 209–212 is the Nuclear localization signal element; that stretch reads KRRR.

The protein belongs to the HSF family. Class C subfamily. Homotrimer. Exhibits temperature-dependent phosphorylation.

It localises to the nucleus. Its function is as follows. Transcriptional regulator that specifically binds DNA of heat shock promoter elements (HSE). This chain is Heat stress transcription factor C-1b (HSFC1B), found in Oryza sativa subsp. japonica (Rice).